The following is a 159-amino-acid chain: UPF0201 protein MK0399 (159 aa).

It belongs to the UPF0201 family.

The protein is UPF0201 protein MK0399 of Methanopyrus kandleri (strain AV19 / DSM 6324 / JCM 9639 / NBRC 100938).